The chain runs to 235 residues: Modulator of macroautophagy TMEM150B (235 aa).

The Cytoplasmic segment spans residues 1 to 8; that stretch reads MWGYLSLL. The chain crosses the membrane as a helical span at residues 9-29; the sequence is PMCLAFWAIAGIWTVFSLAVV. Over 30-51 the chain is Extracellular; that stretch reads NKAVNLTDGFPYISVCGNVPPQ. Asn-34 carries N-linked (GlcNAc...) asparagine glycosylation. Residues 52-72 traverse the membrane as a helical segment; sequence SCIFSQVLNIGAASAAWICIL. At 73–88 the chain is on the cytoplasmic side; sequence RYYQLRDWGVRKWHNQ. The helical transmembrane segment at 89 to 109 threads the bilayer; the sequence is VILWTGLLCALGTSIVGNFQE. The Extracellular segment spans residues 110 to 116; it reads KNQRATH. Residues 117–137 form a helical membrane-spanning segment; that stretch reads LTGAFLAFFVGIVYFWLQLFL. The Cytoplasmic portion of the chain corresponds to 138-156; the sequence is SWRMKNLPQPGAPWIGPLR. A helical transmembrane segment spans residues 157 to 177; the sequence is LVLCSACFILEVAMVVLHSWS. The Extracellular portion of the chain corresponds to 178-180; the sequence is MRS. Residues 181-201 traverse the membrane as a helical segment; it reads VSAICEWVAAMLLFILFGLLA. The Cytoplasmic portion of the chain corresponds to 202–235; that stretch reads VDFSRLDSCTLCLQPGSGSLRPPPDSPTSLHVQL.

It belongs to the DRAM/TMEM150 family.

The protein resides in the cell membrane. It localises to the endosome membrane. The protein localises to the cytoplasmic vesicle. It is found in the autophagosome membrane. Modulator of macroautophagy that causes accumulation of autophagosomes under basal conditions and enhances autophagic flux. Represses cell death and promotes long-term clonogenic survival of cells grown in the absence of glucose in a macroautophagy-independent manner. May have some role in extracellular matrix engulfment or growth factor receptor recycling, both of which can modulate cell survival. In Bos taurus (Bovine), this protein is Modulator of macroautophagy TMEM150B.